The sequence spans 366 residues: Alanine racemase (366 aa).

Lys-33 serves as the catalytic Proton acceptor; specific for D-alanine. At Lys-33 the chain carries N6-(pyridoxal phosphate)lysine. Arg-129 is a substrate binding site. Catalysis depends on Tyr-253, which acts as the Proton acceptor; specific for L-alanine. Met-301 is a binding site for substrate.

It belongs to the alanine racemase family. Pyridoxal 5'-phosphate is required as a cofactor.

The enzyme catalyses L-alanine = D-alanine. It participates in amino-acid biosynthesis; D-alanine biosynthesis; D-alanine from L-alanine: step 1/1. In terms of biological role, catalyzes the interconversion of L-alanine and D-alanine. May also act on other amino acids. This Xanthomonas axonopodis pv. citri (strain 306) protein is Alanine racemase (alr).